The primary structure comprises 102 residues: Small ribosomal subunit protein uS10 (102 aa).

This sequence belongs to the universal ribosomal protein uS10 family. Part of the 30S ribosomal subunit.

Involved in the binding of tRNA to the ribosomes. This chain is Small ribosomal subunit protein uS10, found in Streptococcus thermophilus (strain ATCC BAA-250 / LMG 18311).